The sequence spans 213 residues: Orotate phosphoribosyltransferase (213 aa).

K26 lines the 5-phospho-alpha-D-ribose 1-diphosphate pocket. 34 to 35 is an orotate binding site; that stretch reads FF. 5-phospho-alpha-D-ribose 1-diphosphate-binding positions include 72-73, R99, K100, K103, H105, and 124-132; these read YK and DDVITAGTA. Orotate-binding residues include T128 and R156.

Belongs to the purine/pyrimidine phosphoribosyltransferase family. PyrE subfamily. Homodimer. It depends on Mg(2+) as a cofactor.

It carries out the reaction orotidine 5'-phosphate + diphosphate = orotate + 5-phospho-alpha-D-ribose 1-diphosphate. It participates in pyrimidine metabolism; UMP biosynthesis via de novo pathway; UMP from orotate: step 1/2. Functionally, catalyzes the transfer of a ribosyl phosphate group from 5-phosphoribose 1-diphosphate to orotate, leading to the formation of orotidine monophosphate (OMP). The protein is Orotate phosphoribosyltransferase of Saccharophagus degradans (strain 2-40 / ATCC 43961 / DSM 17024).